Here is a 188-residue protein sequence, read N- to C-terminus: Inosine triphosphate pyrophosphatase (188 aa).

Residue 12-17 coordinates ITP; it reads TGNKNK. Residue Glu40 coordinates Mg(2+). ITP is bound by residues Lys52, 68–69, Lys85, 144–147, Lys165, and 170–171; these read DT, FGWD, and HR.

It belongs to the HAM1 NTPase family. In terms of assembly, homodimer. Mg(2+) is required as a cofactor. The cofactor is Mn(2+).

The protein resides in the cytoplasm. Its subcellular location is the nucleus. The catalysed reaction is ITP + H2O = IMP + diphosphate + H(+). It catalyses the reaction dITP + H2O = dIMP + diphosphate + H(+). It carries out the reaction XTP + H2O = XMP + diphosphate + H(+). Pyrophosphatase that hydrolyzes non-canonical purine nucleotides such as inosine triphosphate (ITP), deoxyinosine triphosphate (dITP) or xanthosine 5'-triphosphate (XTP) to their respective monophosphate derivatives. The enzyme does not distinguish between the deoxy- and ribose forms. Probably excludes non-canonical purines from RNA and DNA precursor pools, thus preventing their incorporation into RNA and DNA and avoiding chromosomal lesions. This Phaeosphaeria nodorum (strain SN15 / ATCC MYA-4574 / FGSC 10173) (Glume blotch fungus) protein is Inosine triphosphate pyrophosphatase.